The sequence spans 270 residues: Tryptophan synthase alpha chain (270 aa).

Residues glutamate 49 and aspartate 60 each act as proton acceptor in the active site.

Belongs to the TrpA family. As to quaternary structure, tetramer of two alpha and two beta chains.

It catalyses the reaction (1S,2R)-1-C-(indol-3-yl)glycerol 3-phosphate + L-serine = D-glyceraldehyde 3-phosphate + L-tryptophan + H2O. It functions in the pathway amino-acid biosynthesis; L-tryptophan biosynthesis; L-tryptophan from chorismate: step 5/5. The alpha subunit is responsible for the aldol cleavage of indoleglycerol phosphate to indole and glyceraldehyde 3-phosphate. The sequence is that of Tryptophan synthase alpha chain from Pseudomonas syringae pv. tomato (strain ATCC BAA-871 / DC3000).